The chain runs to 72 residues: MSKEDMIEFSGTVMELLPNAMFRVKLDNEHSILAHTSGKMRKNRIRVLAGDRVNVEMTPYDLTKGRITFRFK.

In terms of domain architecture, S1-like spans 1-72 (MSKEDMIEFS…TKGRITFRFK (72 aa)).

Belongs to the IF-1 family. Component of the 30S ribosomal translation pre-initiation complex which assembles on the 30S ribosome in the order IF-2 and IF-3, IF-1 and N-formylmethionyl-tRNA(fMet); mRNA recruitment can occur at any time during PIC assembly.

It localises to the cytoplasm. Functionally, one of the essential components for the initiation of protein synthesis. Stabilizes the binding of IF-2 and IF-3 on the 30S subunit to which N-formylmethionyl-tRNA(fMet) subsequently binds. Helps modulate mRNA selection, yielding the 30S pre-initiation complex (PIC). Upon addition of the 50S ribosomal subunit IF-1, IF-2 and IF-3 are released leaving the mature 70S translation initiation complex. This is Translation initiation factor IF-1 from Granulibacter bethesdensis (strain ATCC BAA-1260 / CGDNIH1).